A 101-amino-acid chain; its full sequence is Urease subunit beta (101 aa).

The protein belongs to the urease beta subunit family. As to quaternary structure, heterotrimer of UreA (gamma), UreB (beta) and UreC (alpha) subunits. Three heterotrimers associate to form the active enzyme.

It localises to the cytoplasm. The catalysed reaction is urea + 2 H2O + H(+) = hydrogencarbonate + 2 NH4(+). It functions in the pathway nitrogen metabolism; urea degradation; CO(2) and NH(3) from urea (urease route): step 1/1. This Burkholderia orbicola (strain MC0-3) protein is Urease subunit beta.